We begin with the raw amino-acid sequence, 421 residues long: Testin (421 aa).

One can recognise a PET domain in the interval 92-199; that stretch reads MILTNPVAAK…GDVKLPRDMN (108 aa). 2 disordered regions span residues 133 to 164 and 193 to 213; these read EKQP…PSKC and KLPR…GGDR. Positions 155 to 164 are enriched in basic and acidic residues; that stretch reads PAHDQDPSKC. LIM zinc-binding domains are found at residues 234–297, 299–359, and 362–421; these read YSCY…CDSE, PRCA…NHAV, and QGCH…KMMS.

It belongs to the prickle / espinas / testin family. In terms of assembly, interacts via LIM domain 1 with ZYX. Interacts (via LIM domain 3) with ENAH and VASP. Interacts with ALKBH4, talin, actin, alpha-actinin, GRIP1 and PXN. Interacts (via LIM domain 2) with ACTL7A (via N-terminus). Heterodimer with ACTL7A; the heterodimer interacts with ENAH to form a heterotrimer.

It localises to the cytoplasm. Its subcellular location is the cell junction. It is found in the focal adhesion. Its function is as follows. Scaffold protein that may play a role in cell adhesion, cell spreading and in the reorganization of the actin cytoskeleton. Plays a role in the regulation of cell proliferation. May act as a tumor suppressor. This is Testin (TES) from Muntiacus muntjak (Barking deer).